We begin with the raw amino-acid sequence, 301 residues long: Outer membrane porin G (301 aa).

The signal sequence occupies residues 1-21 (MKKLLPCTALVMCAGMACAQA). The next 16 membrane-spanning stretches (beta stranded) occupy residues 27-35 (WHFNIGAMY), 47-57 (MDGLAEPSVYF), 64-72 (WRIALAYYQ), 89-98 (RPELEVHYQF), 104-112 (FSFGLTGGF), 129-136 (NMQRWKIA), 149-158 (FNGWLSMYKF), 172-182 (VETETGLQYTF), 186-195 (VALRVNYYLE), 201-209 (DDSRNNGEF), 213-222 (EIRAYLPLTL), 230-238 (YTRIGLDRW), 240-248 (NWDWQDDIE), 254-265 (FNRVGLFYGYDF), 269-279 (LSVSLEYAFEW), and 289-300 (KFHYAGVGVNYS).

As to quaternary structure, monomer.

Its subcellular location is the cell outer membrane. Forms channels functionally larger than those of classical porins. Its function is as follows. May act as a regulator of the RCS-phosphorelay signal transduction pathway. This is Outer membrane porin G (ompG) from Escherichia coli (strain K12).